A 620-amino-acid chain; its full sequence is MFDFQHQLKILPDKPGVYIMKNSLGEVIYVGKAKVLKNRVRQYFQNSKNHSEKVRAMVKNIAEFEYIVTDSEMEALILECNLIKKYSPRYNIALKDDKFYPFIKITTNEDFPRVYVTRNFAKDGNRYFGPYTNGTAVYEVMGLIKKLFPLRTCKKAIVEGGEPTRACLNYHINLCKAPCAGYISKAEYWEMIDEIINILNGTDTSIIKKLKLEMEKAAEELEFEKAAKIRDRILAIELISEKQKMFTVKEGDEDFIDLYTDEKDGCAQVFFVREGKVTGREHFMIENIGDDPVKEVISSFIASFYGGTAQIPKTIYVPEEIEDQELIEKFLTEKRGSKVWIKVPKKGDKKNLLDMVRNNAKIMLDQFKEKMVEEKELNKSALTELADVLGLDSLPVRIEAYDISNIQGVDSVGTMVVFENGKAKNSDYRRFKIKSVKGPNDYESMREILSRRFSHGLEEVNKIKERNLEYSNGKFCIFPDLIMMDGGKGQVNIALEVLKGFGIEIPVCGLVKDHKHRTRGIILNNEEILIRRGSGLMNLITRVQDEVHRYAITYHRSLRDKRTLHSILEDIPRIGEKRRRNLLMKFGSIDNIKKASMEELLDTPGIDKRAAESIKQYFSS.

Residues 13 to 92 (DKPGVYIMKN…IKKYSPRYNI (80 aa)) form the GIY-YIG domain. The UVR domain maps to 204 to 239 (TSIIKKLKLEMEKAAEELEFEKAAKIRDRILAIELI).

It belongs to the UvrC family. Interacts with UvrB in an incision complex.

It is found in the cytoplasm. In terms of biological role, the UvrABC repair system catalyzes the recognition and processing of DNA lesions. UvrC both incises the 5' and 3' sides of the lesion. The N-terminal half is responsible for the 3' incision and the C-terminal half is responsible for the 5' incision. This Clostridium perfringens (strain 13 / Type A) protein is UvrABC system protein C.